Here is a 78-residue protein sequence, read N- to C-terminus: Colicin-V immunity protein (78 aa).

In terms of biological role, this protein is able to protect a cell, which harbors the plasmid ColV encoding colicin V, against colicin V. This Escherichia coli protein is Colicin-V immunity protein (cvi).